The following is a 90-amino-acid chain: Probable Fe(2+)-trafficking protein (90 aa).

This sequence belongs to the Fe(2+)-trafficking protein family. As to quaternary structure, monomer.

Its function is as follows. Could be a mediator in iron transactions between iron acquisition and iron-requiring processes, such as synthesis and/or repair of Fe-S clusters in biosynthetic enzymes. In Enterobacter sp. (strain 638), this protein is Probable Fe(2+)-trafficking protein.